Consider the following 333-residue polypeptide: Neuropeptides B/W receptor type 2 (333 aa).

Residues 1 to 45 (MQAAGHPEPLDSRGSFSLPTMGANVSQDNGTGHNATFSEPLPFLY) are Extracellular-facing. Asn24, Asn29, and Asn34 each carry an N-linked (GlcNAc...) asparagine glycan. The helical transmembrane segment at 46–69 (VLLPAVYSGICAVGLTGNTAVILV) threads the bilayer. Over 70–80 (ILRAPKMKTVT) the chain is Cytoplasmic. A helical membrane pass occupies residues 81–105 (NVFILNLAVADGLFTLVLPVNIAEH). Over 106 to 120 (LLQYWPFGELLCKLV) the chain is Extracellular. Residues Cys117 and Cys197 are joined by a disulfide bond. Residues 121–140 (LAVDHYNIFSSIYFLAVMSV) form a helical membrane-spanning segment. Residues 141 to 165 (DRYLVVLATVRSRHMPWRTYRGAKV) lie on the Cytoplasmic side of the membrane. The chain crosses the membrane as a helical span at residues 166-185 (ASLCVWLGVTVLVLPFFSFA). The Extracellular segment spans residues 186–211 (GVYSNELQVPSCGLSFPWPEQVWFKA). The helical transmembrane segment at 212–233 (SRVYTLVLGFVLPVCTICVLYT) threads the bilayer. Residues 234 to 257 (DLLRRLRAVRLRSGAKALGKARRK) are Cytoplasmic-facing. The helical transmembrane segment at 258-282 (VTVLVLVVLAVCLLCWTPFHLASVV) threads the bilayer. At 283 to 292 (ALTTDLPQTP) the chain is on the extracellular side. Residues 293 to 307 (LVISMSYVITSLSYA) form a helical membrane-spanning segment. Topologically, residues 308–333 (NSCLNPFLYAFLDDNFRKNFRSILRC) are cytoplasmic.

This sequence belongs to the G-protein coupled receptor 1 family. In terms of tissue distribution, detected at high levels in caudate nucleus, hippocampus and amygdala; at moderate levels in the adult brain, thalamus, parietal cortex, pituitary gland, adrenal gland and lymph nodes.

Its subcellular location is the cell membrane. In terms of biological role, interacts specifically with a number of opioid ligands. Receptor for neuropeptides B and W, which may be involved in neuroendocrine system regulation, food intake and the organization of other signals. The chain is Neuropeptides B/W receptor type 2 (NPBWR2) from Homo sapiens (Human).